Consider the following 404-residue polypeptide: Aspergillopepsin-1 (404 aa).

The N-terminal stretch at 1 to 20 is a signal peptide; it reads MVILSKVAAVAVGLSTVASA. Residues 21-77 constitute a propeptide, activation peptide; the sequence is LPTGPSHSPHARRGFTINQITRQTARVGPKTASFPAIYSRALAKYGGTVPAHLKSAV. The Peptidase A1 domain maps to 95–401; it reads YLTPVNIGGT…DSQGPRLGFA (307 aa). Asp111 is a catalytic residue. Asn140 carries an N-linked (GlcNAc...) asparagine glycan. Asp293 is an active-site residue. Cys329 and Cys364 form a disulfide bridge.

Belongs to the peptidase A1 family. Monomer.

It is found in the secreted. It catalyses the reaction Hydrolysis of proteins with broad specificity. Generally favors hydrophobic residues in P1 and P1', but also accepts Lys in P1, which leads to activation of trypsinogen. Does not clot milk.. Its function is as follows. Secreted aspartic endopeptidase that allows assimilation of proteinaceous substrates. The scissile peptide bond is attacked by a nucleophilic water molecule activated by two aspartic residues in the active site. Shows a broad primary substrate specificity. Favors hydrophobic residues at the P1 and P1' positions, but also accepts a lysine residue in the P1 position, leading to the activation of trypsinogen and chymotrypsinogen A. The chain is Aspergillopepsin-1 (pepA) from Aspergillus flavus (strain ATCC 200026 / FGSC A1120 / IAM 13836 / NRRL 3357 / JCM 12722 / SRRC 167).